The sequence spans 299 residues: DNA-binding transcriptional activator HetR (299 aa).

The segment at 1–98 (MSNDIDLIKR…GKLLKTLGSQ (98 aa)) is DNA-binding domain. Residues 34-40 (RHGAFLD) and 60-76 (NLRM…KRVK) contribute to the DNA site. Residues 99–216 (EPRYLIQFPY…FYALTRPFYA (118 aa)) are flap domain. Ser152 is a catalytic residue. Position 179–181 (179–181 (SEA)) interacts with DNA. Positions 217–299 (PADDQERTYI…LQMVFGRKED (83 aa)) are hood domain.

Belongs to the peptidase S48 family. Upon expression in E.coli most protein is monomeric, although varying amounts of homodimer can be seen. Homodimer; disulfide-linked. Homodimer. Binds the 6 residue C-terminal peptide of PatS; one peptide binds to each subunit. In bacterial two-hybrid assays interacts robustly with itself, Alr2902 and Alr3234 and more weakly with Als1930. In terms of processing, probably autodegrades.

Protease activity is inhibited by PMSF, suggesting this is a serine protease. Functionally, controls heterocyst differentiation. Dimerization is required for DNA-binding. Has both a protease and a DNA-binding activity. Controls heterocyst differentiation; increased expression leads to more heterocysts than usual. Has protease activity. Binds the promoter regions of hetR, hepA and patS and is required for their expression. Dimerization is required for DNA-binding, DNA-binding is inhibited by the PatS6 peptide. Binds the inverted repeat 5'-GTAGGCGAGGGGTCTAACCCCTCATTACC-3' found in the hetP promoter, required for expression of hetP. In Nostoc sp. (strain PCC 7120 / SAG 25.82 / UTEX 2576), this protein is DNA-binding transcriptional activator HetR.